The primary structure comprises 319 residues: Malate dehydrogenase (319 aa).

NAD(+) is bound by residues 10 to 15 (GSGNIG) and Asp34. Substrate contacts are provided by Arg83 and Arg89. NAD(+) is bound by residues Asn96 and 119-121 (ITN). Substrate is bound by residues Asn121 and Arg152. The Proton acceptor role is filled by His176.

Belongs to the LDH/MDH superfamily. MDH type 3 family.

It carries out the reaction (S)-malate + NAD(+) = oxaloacetate + NADH + H(+). Its function is as follows. Catalyzes the reversible oxidation of malate to oxaloacetate. The protein is Malate dehydrogenase of Paramagnetospirillum magneticum (strain ATCC 700264 / AMB-1) (Magnetospirillum magneticum).